Here is a 377-residue protein sequence, read N- to C-terminus: Nitric oxide reductase FlRd-NAD(+) reductase (377 aa).

The protein belongs to the FAD-dependent oxidoreductase family. FAD serves as cofactor.

Its subcellular location is the cytoplasm. It catalyses the reaction 2 reduced [nitric oxide reductase rubredoxin domain] + NAD(+) + H(+) = 2 oxidized [nitric oxide reductase rubredoxin domain] + NADH. It functions in the pathway nitrogen metabolism; nitric oxide reduction. In terms of biological role, one of at least two accessory proteins for anaerobic nitric oxide (NO) reductase. Reduces the rubredoxin moiety of NO reductase. This Enterobacter sp. (strain 638) protein is Nitric oxide reductase FlRd-NAD(+) reductase.